A 237-amino-acid chain; its full sequence is Neural retina-specific leucine zipper protein (237 aa).

Residues K20 and K24 each participate in a glycyl lysine isopeptide (Lys-Gly) (interchain with G-Cter in SUMO) cross-link. Residues 23–57 form a disordered region; the sequence is VKREPSEGRPGPPTASLGSTPYSSVPPSPTFSEPG. The segment at 30–93 is minimal transactivation domain (MTD); sequence GRPGPPTASL…AGEALGLSPE (64 aa). The interval 159-185 is basic motif; that stretch reads RLKQRRRTLKNRGYAQACRSKRLQQRR. A bZIP domain is found at 159–222; the sequence is RLKQRRRTLK…DLYKARCDRL (64 aa). The tract at residues 187–208 is leucine-zipper; the sequence is LEAERARLAAQLDALRAEVARL.

It belongs to the bZIP family. Interacts with FIZ1; this interaction represses transactivation. Interacts (via the leucine-zipper domain) with CRX. Post-translationally, phosphorylated. In terms of processing, disumoylated at Lys-20. Sumoylation modulates the transcriptional activity of NRL on RHO and NR2E3 promoters, and is required for normal rod differentiation. Expressed in the brain and the retina. Expressed strongly in rod and cone cells (at protein level).

The protein resides in the cytoplasm. Its subcellular location is the nucleus. Its function is as follows. Acts as a transcriptional activator which regulates the expression of several rod-specific genes, including RHO and PDE6B. Also functions as a transcriptional coactivator, stimulating transcription mediated by the transcription factor CRX and NR2E3. Binds to the rhodopsin promoter in a sequence-specific manner. The polypeptide is Neural retina-specific leucine zipper protein (NRL) (Homo sapiens (Human)).